We begin with the raw amino-acid sequence, 402 residues long: Beta-ketoacyl-[acyl-carrier-protein] synthase III B, chloroplastic (402 aa).

Residues Cys178, His328, and Asn358 contribute to the active site.

Belongs to the thiolase-like superfamily. FabH family.

The protein resides in the plastid. It is found in the chloroplast. It carries out the reaction malonyl-[ACP] + acetyl-CoA + H(+) = 3-oxobutanoyl-[ACP] + CO2 + CoA. Its pathway is lipid metabolism; fatty acid biosynthesis. In terms of biological role, catalyzes the condensation reaction of fatty acid synthesis by the addition to an acyl acceptor of two carbons from malonyl-ACP. KAS III catalyzes the first condensation reaction which initiates fatty acid synthesis and may therefore play a role in governing the total rate of fatty acid production. Possesses both acetoacetyl-ACP synthase and acetyl transacylase activities. This chain is Beta-ketoacyl-[acyl-carrier-protein] synthase III B, chloroplastic (KAS3B), found in Cuphea wrightii (Wright's waxweed).